We begin with the raw amino-acid sequence, 834 residues long: Prominin-2 (834 aa).

Residues M1–G26 form the signal peptide. Residues A27 to Y106 are Extracellular-facing. A helical transmembrane segment spans residues V107–F127. The Cytoplasmic segment spans residues C128–A153. The helical transmembrane segment at L154–V174 threads the bilayer. At T175–W426 the chain is on the extracellular side. N-linked (GlcNAc...) asparagine glycosylation occurs at N270. The helical transmembrane segment at I427 to L447 threads the bilayer. At N448–R472 the chain is on the cytoplasmic side. The chain crosses the membrane as a helical span at residues F473 to F493. The Extracellular portion of the chain corresponds to A494–N779. A Phosphoserine modification is found at S727. Residues A780–V800 form a helical membrane-spanning segment. Residues K801–L834 are Cytoplasmic-facing. S818 bears the Phosphoserine mark.

The protein belongs to the prominin family. As to quaternary structure, binds cholesterol. Glycosylated. Present in saliva within small membrane particles (at protein level). Expressed in kidney, prostate, trachea, esophagus, salivary gland, thyroid gland, mammary gland adrenal gland, placenta, stomach, spinal cord and liver. In submucosal tumor, expressed in spindle-shaped or stellate stromal cells. Expressed in prostate cancer cell lines.

It is found in the apical cell membrane. The protein localises to the basolateral cell membrane. The protein resides in the cell projection. It localises to the microvillus membrane. Its subcellular location is the cilium membrane. In Homo sapiens (Human), this protein is Prominin-2 (PROM2).